Consider the following 420-residue polypeptide: Glutamyl-tRNA reductase (420 aa).

Substrate contacts are provided by residues 49–52, serine 109, 114–116, and glutamine 120; these read TCNR and EPQ. The active-site Nucleophile is the cysteine 50. 189-194 serves as a coordination point for NADP(+); it reads GAGETI.

Belongs to the glutamyl-tRNA reductase family. Homodimer.

The catalysed reaction is (S)-4-amino-5-oxopentanoate + tRNA(Glu) + NADP(+) = L-glutamyl-tRNA(Glu) + NADPH + H(+). Its pathway is porphyrin-containing compound metabolism; protoporphyrin-IX biosynthesis; 5-aminolevulinate from L-glutamyl-tRNA(Glu): step 1/2. In terms of biological role, catalyzes the NADPH-dependent reduction of glutamyl-tRNA(Glu) to glutamate 1-semialdehyde (GSA). The protein is Glutamyl-tRNA reductase of Serratia proteamaculans (strain 568).